The chain runs to 199 residues: Holliday junction branch migration complex subunit RuvA (199 aa).

Residues 1–65 (MIGWLHGQII…EDALLLYGFL (65 aa)) are domain I. The segment at 66–144 (DKEERSLFRS…QFDGSVSDTF (79 aa)) is domain II. The segment at 144–148 (FQKQA) is flexible linker. The domain III stretch occupies residues 149–199 (GSTHSQQEAISALEALGYKPQEAWKVMNKIDNGNKSCEQLIREALQILSSR).

It belongs to the RuvA family. As to quaternary structure, homotetramer. Forms an RuvA(8)-RuvB(12)-Holliday junction (HJ) complex. HJ DNA is sandwiched between 2 RuvA tetramers; dsDNA enters through RuvA and exits via RuvB. An RuvB hexamer assembles on each DNA strand where it exits the tetramer. Each RuvB hexamer is contacted by two RuvA subunits (via domain III) on 2 adjacent RuvB subunits; this complex drives branch migration. In the full resolvosome a probable DNA-RuvA(4)-RuvB(12)-RuvC(2) complex forms which resolves the HJ.

The protein resides in the cytoplasm. Its function is as follows. The RuvA-RuvB-RuvC complex processes Holliday junction (HJ) DNA during genetic recombination and DNA repair, while the RuvA-RuvB complex plays an important role in the rescue of blocked DNA replication forks via replication fork reversal (RFR). RuvA specifically binds to HJ cruciform DNA, conferring on it an open structure. The RuvB hexamer acts as an ATP-dependent pump, pulling dsDNA into and through the RuvAB complex. HJ branch migration allows RuvC to scan DNA until it finds its consensus sequence, where it cleaves and resolves the cruciform DNA. In Legionella pneumophila subsp. pneumophila (strain Philadelphia 1 / ATCC 33152 / DSM 7513), this protein is Holliday junction branch migration complex subunit RuvA.